Reading from the N-terminus, the 426-residue chain is DUF724 domain-containing protein 9 (426 aa).

2 stretches are compositionally biased toward polar residues: residues 164 to 184 (ESSL…NANE) and 213 to 222 (PRNQNASVND). The disordered stretch occupies residues 164–248 (ESSLTQGSGD…REESLCSDAS (85 aa)). Residues 223 to 242 (STRENENSEDINRKRKREES) are compositionally biased toward basic and acidic residues. The region spanning 256–425 (LPFEKKLSIW…LQFQTTASAP (170 aa)) is the DUF724 domain. Residues 370–402 (AEKESIKIENERKILELQRLNEEVDKEIAQSKS) are a coiled coil.

As to expression, expressed in flowers.

It is found in the nucleus. Functionally, may be involved in the polar growth of plant cells via transportation of RNAs. This Arabidopsis thaliana (Mouse-ear cress) protein is DUF724 domain-containing protein 9.